A 429-amino-acid polypeptide reads, in one-letter code: Small ribosomal subunit protein mS47 (429 aa).

Positions 141, 166, 189, and 197 each coordinate substrate.

This sequence belongs to the enoyl-CoA hydratase/isomerase family. Mitochondrion-specific ribosomal protein mS47 subfamily. Component of the mitochondrial small ribosomal subunit (mt-SSU). Mature yeast 74S mitochondrial ribosomes consist of a small (37S) and a large (54S) subunit. The 37S small subunit contains a 15S ribosomal RNA (15S mt-rRNA) and at least 32 different proteins. The 54S large subunit contains a 21S rRNA (21S mt-rRNA) and at least 45 different proteins. mS47/snr1 forms a protuberance of the yeast mitoribosome and retains a solvent-exposed cavity likely capable of accommodating a substrate, in accordance with it being an active enzyme as well as an integral constituent of the mitoribosome.

It localises to the mitochondrion. It carries out the reaction 3-hydroxy-2-methylpropanoyl-CoA + H2O = 3-hydroxy-2-methylpropanoate + CoA + H(+). Its pathway is amino-acid degradation; L-valine degradation. In terms of biological role, component of the mitochondrial ribosome (mitoribosome), a dedicated translation machinery responsible for the synthesis of mitochondrial genome-encoded proteins, including at least some of the essential transmembrane subunits of the mitochondrial respiratory chain. The mitoribosomes are attached to the mitochondrial inner membrane and translation products are cotranslationally integrated into the membrane. mS47/snr1 has enzymatic activity in vitro, and is able to catalyze the specific hydrolysis of 3-hydroxyisobutyryl-CoA (HIBYL-CoA). However, because the turnover rate of mS47/snr1 is only a fraction of that of the homologous mammalian enzyme, the physiological function of this activity remains unclear. Has an indirect role in endocytic membrane trafficking. The protein is Small ribosomal subunit protein mS47 (snr1) of Schizosaccharomyces pombe (strain 972 / ATCC 24843) (Fission yeast).